Here is a 94-residue protein sequence, read N- to C-terminus: Conotoxin Gla-MrII (94 aa).

The signal sequence occupies residues 1-25 (MFGHTSVSFLLLSIVALGMVATVIC). Residues Glu-30, Glu-34, Glu-37, Glu-40, and Glu-41 each carry the 4-carboxyglutamate modification. The propeptide occupies 78–94 (STHMQKRFLRMPRDLAD).

Belongs to the conotoxin I2 superfamily. Post-translationally, contains 4 disulfide bonds. Expressed by the venom duct.

The protein resides in the secreted. The protein is Conotoxin Gla-MrII of Conus marmoreus (Marble cone).